We begin with the raw amino-acid sequence, 303 residues long: Ribonuclease Z (303 aa).

Residues His-61, His-63, Asp-65, His-66, His-138, Asp-206, and His-265 each contribute to the Zn(2+) site. Residue Asp-65 is the Proton acceptor of the active site.

It belongs to the RNase Z family. Homodimer. Zn(2+) serves as cofactor.

It catalyses the reaction Endonucleolytic cleavage of RNA, removing extra 3' nucleotides from tRNA precursor, generating 3' termini of tRNAs. A 3'-hydroxy group is left at the tRNA terminus and a 5'-phosphoryl group is left at the trailer molecule.. Functionally, zinc phosphodiesterase, which displays some tRNA 3'-processing endonuclease activity. Probably involved in tRNA maturation, by removing a 3'-trailer from precursor tRNA. This is Ribonuclease Z from Agathobacter rectalis (strain ATCC 33656 / DSM 3377 / JCM 17463 / KCTC 5835 / VPI 0990) (Eubacterium rectale).